The sequence spans 662 residues: 72 kDa type IV collagenase (662 aa).

A signal peptide spans 1-29 (MEARLVWGVLVGPLRVLCVLCCLLGHAIA). The propeptide at 30–109 (APSPIIKFPG…PRCGNPDVAN (80 aa)) is activation peptide. A Cysteine switch motif is present at residues 100-107 (PRCGNPDV). A Zn(2+)-binding site is contributed by C102. The tract at residues 110–221 (YNFFPRKPKW…LWTLGEGQVV (112 aa)) is collagenase-like 1. The Ca(2+) site is built by D134 and D168. Zn(2+) is bound by residues H178 and D180. Ca(2+)-binding residues include D185 and G186. Residue H193 coordinates Zn(2+). Ca(2+) is bound by residues G200, G202, and D204. Residue H206 coordinates Zn(2+). D208, D209, and E211 together coordinate Ca(2+). The interval 222 to 396 (RVKYGNADGE…WGFCPDQGYS (175 aa)) is collagen-binding. Fibronectin type-II domains are found at residues 228–276 (ADGE…FCPH), 286–334 (GDGQ…FCPE), and 344–392 (SEGA…FCPD). Disulfide bonds link C233/C259, C247/C274, C291/C317, C305/C332, C349/C375, and C363/C390. Residues 397-467 (LFLVAAHEFG…GPTPTLGPVT (71 aa)) form a collagenase-like 2 region. H403 contributes to the Zn(2+) binding site. Residue E404 is part of the active site. Residues H407 and H413 each contribute to the Zn(2+) site. The interval 414–662 (SQDPGALMAP…GSIKSDWLGC (249 aa)) is required for inhibitor TIMP2 binding. An intrachain disulfide couples C471 to C662. Hemopexin repeat units lie at residues 474 to 518 (DIVF…WPEL), 519 to 565 (PEKI…GLPP), 567 to 615 (VQQV…WNAI), and 616 to 662 (PDNL…WLGC). Residues D478, D523, and D571 each coordinate Ca(2+). An N-linked (GlcNAc...) asparagine glycan is attached at N575. D620 serves as a coordination point for Ca(2+). N-linked (GlcNAc...) asparagine glycosylation is present at N644.

Belongs to the peptidase M10A family. Interacts (via the C-terminal hemopexin-like domains-containing region) with the integrin alpha-V/beta-3; the interaction promotes vascular invasion in angiogenic vessels and melamoma cells. Interacts (via the C-terminal PEX domain) with TIMP2 (via the C-terminal); the interaction inhibits the degradation activity. Interacts with GSK3B. Ca(2+) is required as a cofactor. The cofactor is Zn(2+). In terms of processing, phosphorylation on multiple sites modulates enzymatic activity. Phosphorylated by PKC in vitro. The propeptide is processed by MMP14 (MT-MMP1) and MMP16 (MT-MMP3). Autocatalytic cleavage in the C-terminal produces the anti-angiogenic peptide, PEX. This processing appears to be facilitated by binding integrin integrinv/beta3.

The protein resides in the secreted. The protein localises to the extracellular space. Its subcellular location is the extracellular matrix. It localises to the membrane. It is found in the nucleus. The enzyme catalyses Cleavage of gelatin type I and collagen types IV, V, VII, X. Cleaves the collagen-like sequence Pro-Gln-Gly-|-Ile-Ala-Gly-Gln.. Functionally, ubiquitinous metalloproteinase that is involved in diverse functions such as remodeling of the vasculature, angiogenesis, tissue repair, tumor invasion, inflammation, and atherosclerotic plaque rupture. As well as degrading extracellular matrix proteins, can also act on several nonmatrix proteins such as big endothelial 1 and beta-type CGRP promoting vasoconstriction. Also cleaves KISS at a Gly-|-Leu bond. Appears to have a role in myocardial cell death pathways. Contributes to myocardial oxidative stress by regulating the activity of GSK3beta. Cleaves GSK3beta in vitro. Involved in the formation of the fibrovascular tissues. Its function is as follows. PEX, the C-terminal non-catalytic fragment of MMP2, possesses anti-angiogenic and anti-tumor properties and inhibits cell migration and cell adhesion to FGF2 and vitronectin. Ligand for integrin alpha-v/beta3 on the surface of blood vessels. This chain is 72 kDa type IV collagenase (Mmp2), found in Rattus norvegicus (Rat).